Here is a 350-residue protein sequence, read N- to C-terminus: Quinolinate phosphoribosyltransferase [decarboxylating] 1b (350 aa).

Substrate contacts are provided by residues Arg141, 172–174, Arg196, Lys206, Glu239, Asp266, 298–300, and 319–321; these read TRK, SGN, and SGA.

The protein belongs to the NadC/ModD family.

The catalysed reaction is nicotinate beta-D-ribonucleotide + CO2 + diphosphate = quinolinate + 5-phospho-alpha-D-ribose 1-diphosphate + 2 H(+). It participates in alkaloid biosynthesis; nicotine biosynthesis. It functions in the pathway cofactor biosynthesis; NAD(+) biosynthesis; nicotinate D-ribonucleotide from quinolinate: step 1/1. Functionally, involved in the biosynthesis of pyridine alkaloid natural products, leading mainly to the production of anabasine, anatabine, nicotine and nornicotine, effective deterrents against herbivores with antiparasitic and pesticide properties (neurotoxins); nornicotine serves as the precursor in the synthesis of the carcinogen compound N'-nitrosonornicotine (NNN). Involved in the catabolism of quinolinic acid (QA). The protein is Quinolinate phosphoribosyltransferase [decarboxylating] 1b of Nicotiana tabacum (Common tobacco).